A 1855-amino-acid polypeptide reads, in one-letter code: Chitin synthase 5 (1855 aa).

Residues 1–778 (MSSAPTTQQN…CWRQIVRAGD (778 aa)) enclose the Myosin motor domain. 95 to 102 (GESGTGKT) provides a ligand contact to ATP. 3 N-linked (GlcNAc...) asparagine glycosylation sites follow: asparagine 221, asparagine 520, and asparagine 558. The tract at residues 585 to 650 (AVQQASVASK…PKSADTQQGA (66 aa)) is disordered. The interval 658–682 (LDNINKSLTAPNTNPYFFFCLKPND) is actin-binding. Asparagine 662 is a glycosylation site (N-linked (GlcNAc...) asparagine). 2 helical membrane-spanning segments follow: residues 887–907 (WLVLVYVLTWWCPDWAIRIIG) and 922–942 (VAINFIIWLSCAFVVFFMVGF). Residues 950–1008 (QHVFSPSELTSYDGKNSDAYVAIRGNVFDLGAFIPQHYPSIVPASALEKYAGTDATNLF) enclose the Cytochrome b5 heme-binding domain. Asparagine 1037 and asparagine 1061 each carry an N-linked (GlcNAc...) asparagine glycan. The helical transmembrane segment at 1199–1219 (ILLAVSIMLVSVICFKFLAAL) threads the bilayer. Residues asparagine 1422, asparagine 1456, and asparagine 1562 are each glycosylated (N-linked (GlcNAc...) asparagine). The next 3 membrane-spanning stretches (helical) occupy residues 1587–1607 (FVVFLDLLSTIVQPVIVGYIV), 1621–1641 (ATTAFILIAAIYGLQAIIFIV), and 1650–1670 (WMIIYILATPIFSFCLPLIAF). N-linked (GlcNAc...) asparagine glycans are attached at residues asparagine 1755 and asparagine 1767. One can recognise a DEK-C domain in the interval 1797 to 1852 (MPNDDAILAEIREILATADLMTVTKKSIKAELERRFGVPMDSRRQYIGSATEAILS).

This sequence in the N-terminal section; belongs to the TRAFAC class myosin-kinesin ATPase superfamily. Myosin family. In the C-terminal section; belongs to the chitin synthase family. Class V subfamily.

The protein localises to the apical cell membrane. It localises to the cell septum. The protein resides in the cell tip. It carries out the reaction [(1-&gt;4)-N-acetyl-beta-D-glucosaminyl](n) + UDP-N-acetyl-alpha-D-glucosamine = [(1-&gt;4)-N-acetyl-beta-D-glucosaminyl](n+1) + UDP + H(+). Polymerizes chitin, a structural polymer of the cell wall and septum, by transferring the sugar moiety of UDP-GlcNAc to the non-reducing end of the growing chitin polymer. This Zymoseptoria tritici (strain CBS 115943 / IPO323) (Speckled leaf blotch fungus) protein is Chitin synthase 5.